Here is a 283-residue protein sequence, read N- to C-terminus: MKQYLDLCRRIVSEGEWVANERTGKHCLTVINADLEYDVANNQFPLITTRKSYWKAAIAEFLGYIRGYDNAADFRALGTKTWDANANVNAAWLANPHRRGVDDMGRVYGVQGRAWRKPNGETIDQLRKIVNNLTKGIDDRGEILTFFNPGEFDLGCLRPCMHTHTFSLVGDTLHLTSYQRSCDVPLGLNFNQIQVFTFLALMAQITGKKAGKAYHKIVNAHIYEDQLELMRDVQLKREPFPLPKLEINPDIKTLEDLETWVTMDDFKVVGYQSHEPIKYPFSV.

A dUMP-binding site is contributed by Arg-22. Cys-160 (nucleophile) is an active-site residue. DUMP is bound by residues 180–183 (RSCD), Asn-191, and 221–223 (HIY). (6R)-5,10-methylene-5,6,7,8-tetrahydrofolate is bound at residue Asp-183. Ser-282 lines the (6R)-5,10-methylene-5,6,7,8-tetrahydrofolate pocket.

It belongs to the thymidylate synthase family. Bacterial-type ThyA subfamily. In terms of assembly, homodimer.

It is found in the cytoplasm. The enzyme catalyses dUMP + (6R)-5,10-methylene-5,6,7,8-tetrahydrofolate = 7,8-dihydrofolate + dTMP. It functions in the pathway pyrimidine metabolism; dTTP biosynthesis. In terms of biological role, catalyzes the reductive methylation of 2'-deoxyuridine-5'-monophosphate (dUMP) to 2'-deoxythymidine-5'-monophosphate (dTMP) while utilizing 5,10-methylenetetrahydrofolate (mTHF) as the methyl donor and reductant in the reaction, yielding dihydrofolate (DHF) as a by-product. This enzymatic reaction provides an intracellular de novo source of dTMP, an essential precursor for DNA biosynthesis. The sequence is that of Thymidylate synthase from Haemophilus influenzae (strain 86-028NP).